The following is a 151-amino-acid chain: IFN signaling evasion protein OPG029 (151 aa).

Belongs to the orthopoxvirus OPG029 family. As to quaternary structure, interacts with host TANK, TBKBP1 and AZI2; these interactions prevent interferon production. Interacts with host STAT2.

In terms of biological role, prevents establishment of cellular antiviral state by blocking virus-induced phosphorylation and activation of interferon regulatory factors 3/IRF3 and 7/IRF7, transcription factors critical for the induction of interferons alpha and beta. This blockage is produced through the inhibition of host TBK1, by binding host TBK1 adapter proteins TBKBP1 and AZI2, thereby producing a strong inhibition of the phosphorylation and activation of IRF3 and IRF7. Also acts as an inhibitor of the cellular response to type I IFN by interacting with host STAT2. Mechanistically, exerts its inhibitory effect after host ISGF3 complex (composed of STAT1, STAT2 and IRF9) binding to the interferon stimulated response element (ISRE). The chain is IFN signaling evasion protein OPG029 (OPG029) from Vaccinia virus (strain Western Reserve) (VACV).